A 162-amino-acid chain; its full sequence is Caveolin-2 (162 aa).

Over 1–86 (MGLETEKADV…FEVSKYVIYK (86 aa)) the chain is Cytoplasmic. Y19 is subject to Phosphotyrosine; by SRC. Residues S20 and S23 each carry the phosphoserine modification. Residue Y27 is modified to Phosphotyrosine; by SRC. An intramembrane region (helical) is located at residues 87 to 107 (FLTLFLAIPLAFAAGILFATL). Topologically, residues 108–162 (SCLHIWIVMPFVKTCLMVLPSVQTIWKSVTDVVIAPLCASVGRSFSSVSMQLSRD) are cytoplasmic.

It belongs to the caveolin family. As to quaternary structure, monomer or homodimer. Interacts with CAV1; the interaction forms a stable heterooligomeric complex that is required for targeting to lipid rafts and for caveolae formation. Tyrosine phosphorylated forms do not form heterooligomers with the Tyr-19-phosphorylated form existing as a monomer or dimer, and the Tyr-27-form as a monomer only. Interacts (tyrosine phosphorylated form) with the SH2 domain-containing proteins, RASA1, NCK1 and SRC. Interacts (tyrosine phosphorylated form) with INSR, the interaction (Tyr-27-phosphorylated form) is increased on insulin stimulation. Interacts (Tyr-19 phosphorylated form) with MAPK1 (phosphorylated form); the interaction, promoted by insulin, leads to nuclear location and MAPK1 activation. Interacts with STAT3; the interaction is increased on insulin-induced tyrosine phosphorylation leading to STAT activation. In terms of processing, phosphorylated on serine and tyrosine residues. CAV1 promotes phosphorylation on Ser-23 which then targets the complex to the plasma membrane, lipid rafts and caveolae. Phosphorylation on both Tyr-19 and Tyr-27 is required for insulin-induced 'Ser-727' phosphorylation of STAT3 and its activation. Phosphorylation on Tyr-19 is required for insulin-induced phosphorylation of MAPK1 and DNA binding of STAT3. Tyrosine phosphorylation is induced by both EGF and insulin.

The protein localises to the nucleus. It is found in the cytoplasm. The protein resides in the golgi apparatus membrane. Its subcellular location is the cell membrane. It localises to the membrane. The protein localises to the caveola. Its function is as follows. May act as a scaffolding protein within caveolar membranes. Interacts directly with G-protein alpha subunits and can functionally regulate their activity. Acts as an accessory protein in conjunction with CAV1 in targeting to lipid rafts and driving caveolae formation. Positive regulator of cellular mitogenesis of the MAPK signaling pathway. Required for the insulin-stimulated nuclear translocation and activation of MAPK1 and STAT3, and the subsequent regulation of cell cycle progression. The chain is Caveolin-2 (CAV2) from Rhinolophus ferrumequinum (Greater horseshoe bat).